The chain runs to 335 residues: MVTLHGUACKLPDTELENLVKGIISEDDLKHAKVGLGDDAAVVIKNGMAIVKTIDVFTPIVDDPYLQGRIAACNSTSDVYAMGISEIIGGLVFLGIPPELPVPVAKKMLQGFQDFCRENDTTIIGGHTILNPWPLIGGSITGVGKEEDILTKAGCKNGDVLILTKPLGNQSAMALSRVTEEFEDLIDIPKEEQKYIFEKTIELMTTSNRIALLHLRELENELGEKIANAMTDVTGFGILGHSQEMAEQSDVEIEISCLPVIKGTPELASLFGHALCSGKGAETAGGLLISTKPEYKDKLIQKFKENNVYAFEVGKIVNNGVGIAKLSENVEILEI.

Sec7 is an active-site residue. Sec7 is a non-standard amino acid (selenocysteine). ATP is bound by residues Lys10 and 36–38; that span reads LGD. Asp39 is a binding site for Mg(2+). Residues Asp55, Asp78, and 126 to 128 contribute to the ATP site; that span reads GHT. Asp78 provides a ligand contact to Mg(2+). Asp232 serves as a coordination point for Mg(2+).

It belongs to the selenophosphate synthase 1 family. Class I subfamily. Homodimer. Mg(2+) serves as cofactor.

It carries out the reaction hydrogenselenide + ATP + H2O = selenophosphate + AMP + phosphate + 2 H(+). In terms of biological role, synthesizes selenophosphate from selenide and ATP. In Methanococcus maripaludis (strain DSM 14266 / JCM 13030 / NBRC 101832 / S2 / LL), this protein is Selenide, water dikinase.